Consider the following 370-residue polypeptide: 4-hydroxy-3-methylbut-2-en-1-yl diphosphate synthase (flavodoxin) (370 aa).

[4Fe-4S] cluster contacts are provided by Cys-270, Cys-273, Cys-305, and Glu-312.

Belongs to the IspG family. [4Fe-4S] cluster serves as cofactor.

The catalysed reaction is (2E)-4-hydroxy-3-methylbut-2-enyl diphosphate + oxidized [flavodoxin] + H2O + 2 H(+) = 2-C-methyl-D-erythritol 2,4-cyclic diphosphate + reduced [flavodoxin]. The protein operates within isoprenoid biosynthesis; isopentenyl diphosphate biosynthesis via DXP pathway; isopentenyl diphosphate from 1-deoxy-D-xylulose 5-phosphate: step 5/6. Its function is as follows. Converts 2C-methyl-D-erythritol 2,4-cyclodiphosphate (ME-2,4cPP) into 1-hydroxy-2-methyl-2-(E)-butenyl 4-diphosphate. The polypeptide is 4-hydroxy-3-methylbut-2-en-1-yl diphosphate synthase (flavodoxin) (Marinomonas sp. (strain MWYL1)).